Consider the following 489-residue polypeptide: Rhamnulokinase (489 aa).

ATP is bound at residue A13–R17. A disulfide bridge links C68 with C222. Residues G83 and H236–T238 each bind substrate. Catalysis depends on D237, which acts as the Proton acceptor. Position 259 (T259) interacts with ATP. N296 lines the substrate pocket. Q304 contributes to the ATP binding site. C353 and C370 are joined by a disulfide. G402 is a binding site for ATP. The cysteines at positions 413 and 417 are disulfide-linked.

The protein belongs to the rhamnulokinase family. The cofactor is Mg(2+).

It carries out the reaction L-rhamnulose + ATP = L-rhamnulose 1-phosphate + ADP + H(+). It participates in carbohydrate degradation; L-rhamnose degradation; glycerone phosphate from L-rhamnose: step 2/3. Involved in the catabolism of L-rhamnose (6-deoxy-L-mannose). Catalyzes the transfer of the gamma-phosphate group from ATP to the 1-hydroxyl group of L-rhamnulose to yield L-rhamnulose 1-phosphate. This Salmonella typhi protein is Rhamnulokinase.